The chain runs to 345 residues: NADH-ubiquinone oxidoreductase chain 2 (345 aa).

Helical transmembrane passes span 1 to 21 (MNPIINFILLSSMIAGTVLTM), 60 to 80 (FLIQAASSALMLFAGIINAHL), 110 to 130 (PIHFWLPEILQGVPMLTALII), 149 to 169 (IPTPMTLTMGFLSVIIGGLGG), 179 to 196 (MAFSSIAHLGWMIVIITI), 200 to 222 (LTLFNLVLYITFTSSTMLIMHLT), 240 to 260 (TANLFLLSLLSLGGLPPLSGF), 274 to 294 (NLVPLATTMAITTLFSLMFYL), and 323 to 343 (TTMLSMFSLATLFLLPITPTM).

Belongs to the complex I subunit 2 family.

The protein localises to the mitochondrion inner membrane. The enzyme catalyses a ubiquinone + NADH + 5 H(+)(in) = a ubiquinol + NAD(+) + 4 H(+)(out). In terms of biological role, core subunit of the mitochondrial membrane respiratory chain NADH dehydrogenase (Complex I) that is believed to belong to the minimal assembly required for catalysis. Complex I functions in the transfer of electrons from NADH to the respiratory chain. The immediate electron acceptor for the enzyme is believed to be ubiquinone. This is NADH-ubiquinone oxidoreductase chain 2 (MT-ND2) from Varanus melinus (Quince monitor lizard).